A 276-amino-acid chain; its full sequence is MIVIGRSIVHPYITNEYEPFAAEKQQILSIMAGNQEIYSFRTSDELSFDLNLRVNIITSALELFQSGFQFRTFQQSFCNPQYWKRTSLGGFELLPNIPPSIAIQDIFKNGKLYGTECATAMIIIFYKALLSLYEEETFNRLFANLLLYTWDYDQDLKLITKTGGDLVPGDLVYFKNPQVNPATIEWQGENTIYLGNFFFYGHGVGVKTKEEIIYALNERRVPYAFISAFLTDTITRIDSRLMSYHASPSTPQTSIGFIPIRDDAIVATVGNTTTVY.

Belongs to the bacillus TGase family.

It catalyses the reaction L-glutaminyl-[protein] + L-lysyl-[protein] = [protein]-L-lysyl-N(6)-5-L-glutamyl-[protein] + NH4(+). Its function is as follows. Probably plays a role in the assembly of the spore coat proteins by catalyzing epsilon-(gamma-glutamyl)lysine cross-links. This is Protein-glutamine gamma-glutamyltransferase from Bacillus cereus (strain 03BB102).